The primary structure comprises 733 residues: DNA-binding protein SATB2 (733 aa).

The tract at residues 1–47 is disordered; the sequence is MERRSESPCLRDSPDRRSGSPDVKGPPPVKVARLEQNGSPMGARGRP. At Ser-20 the chain carries Phosphoserine. Glycyl lysine isopeptide (Lys-Gly) (interchain with G-Cter in SUMO2) cross-links involve residues Lys-24 and Lys-30. Ser-39 carries the phosphoserine modification. Positions 57-158 constitute a CMP domain; it reads GLMIPVFCVV…VVTLKIQLQS (102 aa). A Glycyl lysine isopeptide (Lys-Gly) (interchain with G-Cter in SUMO2) cross-link involves residue Lys-161. The 74-residue stretch at 161 to 234 folds into the CUTL domain; the sequence is KLEDLPAEQW…WYKKYKKIKV (74 aa). Lys-233 participates in a covalent cross-link: Glycyl lysine isopeptide (Lys-Gly) (interchain with G-Cter in SUMO). Residue Lys-350 forms a Glycyl lysine isopeptide (Lys-Gly) (interchain with G-Cter in SUMO); alternate linkage. A Glycyl lysine isopeptide (Lys-Gly) (interchain with G-Cter in SUMO2); alternate cross-link involves residue Lys-350. A DNA-binding region (CUT 1) is located at residues 350 to 437; it reads KPEPTNSSVE…ERDRIYQDER (88 aa). Residues 435 to 473 form a disordered region; the sequence is DERERSMNPNVSMVSSASSSPSSSRTPQAKTSTPTTDLP. The span at 441–458 shows a compositional bias: low complexity; it reads MNPNVSMVSSASSSPSSS. Ser-454 is subject to Phosphoserine. Residues 459-470 are compositionally biased toward polar residues; that stretch reads RTPQAKTSTPTT. Thr-467 is subject to Phosphothreonine. The segment at residues 473–560 is a DNA-binding region (CUT 2); the sequence is PIKVDGANIN…ERDVIYEEES (88 aa). Lys-475 participates in a covalent cross-link: Glycyl lysine isopeptide (Lys-Gly) (interchain with G-Cter in SUMO2). A compositionally biased stretch (low complexity) spans 580–593; that stretch reads QVLHRQQSQPAKES. Disordered stretches follow at residues 580-617 and 694-733; these read QVLH…KPRS and LLTE…IDQR. A Phosphoserine modification is found at Ser-594. A DNA-binding region (homeobox) is located at residues 615 to 674; sequence PRSRTKISLEALGILQSFIHDVGLYPDQEAIHTLSAQLDLPKHTIIKFFQNQRYHVKHHG. Positions 694–708 are enriched in acidic residues; sequence LLTESEENDSEEGSE. Residues 709–733 are compositionally biased toward basic and acidic residues; it reads EMYKVEAEEENADKSKAAPAEIDQR. Lys-724 participates in a covalent cross-link: Glycyl lysine isopeptide (Lys-Gly) (interchain with G-Cter in SUMO2).

The protein belongs to the CUT homeobox family. Interacts with ATF4 and RUNX2; resulting in enhanced DNA binding and transactivation by these transcription factors. Interacts with PIAS1. Post-translationally, sumoylated by PIAS1. Sumoylation promotes nuclear localization, but represses transcription factor activity. As to expression, high expression in adult brain, moderate expression in fetal brain, and weak expression in adult liver, kidney, and spinal cord and in select brain regions, including amygdala, corpus callosum, caudate nucleus, and hippocampus.

It is found in the nucleus matrix. Functionally, binds to DNA, at nuclear matrix- or scaffold-associated regions. Thought to recognize the sugar-phosphate structure of double-stranded DNA. Transcription factor controlling nuclear gene expression, by binding to matrix attachment regions (MARs) of DNA and inducing a local chromatin-loop remodeling. Acts as a docking site for several chromatin remodeling enzymes and also by recruiting corepressors (HDACs) or coactivators (HATs) directly to promoters and enhancers. Required for the initiation of the upper-layer neurons (UL1) specific genetic program and for the inactivation of deep-layer neurons (DL) and UL2 specific genes, probably by modulating BCL11B expression. Repressor of Ctip2 and regulatory determinant of corticocortical connections in the developing cerebral cortex. May play an important role in palate formation. Acts as a molecular node in a transcriptional network regulating skeletal development and osteoblast differentiation. The chain is DNA-binding protein SATB2 (SATB2) from Homo sapiens (Human).